Consider the following 127-residue polypeptide: Large ribosomal subunit protein uL22 (127 aa).

As to quaternary structure, part of the 50S ribosomal subunit.

This protein binds specifically to 23S rRNA; its binding is stimulated by other ribosomal proteins, e.g. L4, L17, and L20. It is important during the early stages of 50S assembly. It makes multiple contacts with different domains of the 23S rRNA in the assembled 50S subunit and ribosome. Functionally, the globular domain of the protein is located near the polypeptide exit tunnel on the outside of the subunit, while an extended beta-hairpin is found that lines the wall of the exit tunnel in the center of the 70S ribosome. This is Large ribosomal subunit protein uL22 from Rhodopseudomonas palustris (strain ATCC BAA-98 / CGA009).